The following is a 284-amino-acid chain: Urease accessory protein UreD (284 aa).

This sequence belongs to the UreD family. UreD, UreF and UreG form a complex that acts as a GTP-hydrolysis-dependent molecular chaperone, activating the urease apoprotein by helping to assemble the nickel containing metallocenter of UreC. The UreE protein probably delivers the nickel.

It is found in the cytoplasm. In terms of biological role, required for maturation of urease via the functional incorporation of the urease nickel metallocenter. This is Urease accessory protein UreD from Bordetella bronchiseptica (strain ATCC BAA-588 / NCTC 13252 / RB50) (Alcaligenes bronchisepticus).